A 148-amino-acid chain; its full sequence is Ribosome maturation factor RimP (148 aa).

The protein belongs to the RimP family.

Its subcellular location is the cytoplasm. In terms of biological role, required for maturation of 30S ribosomal subunits. The polypeptide is Ribosome maturation factor RimP (Treponema denticola (strain ATCC 35405 / DSM 14222 / CIP 103919 / JCM 8153 / KCTC 15104)).